Consider the following 522-residue polypeptide: Gypsy retrotransposon integrase-like protein 1 (522 aa).

The Integrase catalytic domain occupies 135-292 (KVENPWSLVT…TPYFQMFSRN (158 aa)). Residue serine 502 is modified to Phosphoserine.

As to expression, widely expressed. Also found in tumors originating from parathyroid gland, colon, stomach, bladder, uterus and prostate.

The polypeptide is Gypsy retrotransposon integrase-like protein 1 (GIN1) (Homo sapiens (Human)).